Reading from the N-terminus, the 515-residue chain is MDLSLIQGMSLPLYFLLTLFFFFFATAKTRRSSSTGTLPPGPPILPLVGNIFQLGFNPHRSLAAFSKTYGPIMSLKLGRLTAVVISSPEAAKEALRTHDHVMSARTFNDALRAFDHHKHSIVWIPPSARWRFLKKTITKYLLSPQNLDAIQSLRMRKVEELVSLVNEFRERGEAIDLARASFVTSFNIISNALFSVDLATYDSNSSSYEFHNTVVHLTDIAGIPNVGDYFQYMRFLDLQGTRKKAVLCIEKLFRVFQEFIDARLAKRFSRTEKEPKEASSIDMLDSLLDLTQQNEAELTMNDLKHLLLDVFVAGTDTNSSTMEWAMTELFRSTEKMVKAQSEIRQVIGQNGFVQESDIPSLPYLQAIVKETLRLHPAAPLIPRKSESDVQIMGFLVPKNTQVVVNVWAIGRDASVWENPMKFEPERFLLRETDVKGRDFELIPFGSGRRMCPGISMALKTMHMVLASLLYSFDWKLQNGVVPGNIDMSETFGLTLHKAKSLCAVPVKKPTISSSY.

Residues 5 to 25 (LIQGMSLPLYFLLTLFFFFFA) form a helical membrane-spanning segment. Cys451 lines the heme pocket.

The protein belongs to the cytochrome P450 family. Heme is required as a cofactor.

The protein resides in the membrane. This is Cytochrome P450 76C3 (CYP76C3) from Arabidopsis thaliana (Mouse-ear cress).